Here is a 233-residue protein sequence, read N- to C-terminus: UPF0502 protein Mpe_A1449 (233 aa).

The protein belongs to the UPF0502 family.

This is UPF0502 protein Mpe_A1449 from Methylibium petroleiphilum (strain ATCC BAA-1232 / LMG 22953 / PM1).